Reading from the N-terminus, the 274-residue chain is Large ribosomal subunit protein uL2 (274 aa).

A disordered region spans residues 223 to 274 (VAMNPVDHPHGGGEGRTSGGRHPVSPWGMPTKGFKTRKNKSTDKYIVRRRNK).

Belongs to the universal ribosomal protein uL2 family. Part of the 50S ribosomal subunit. Forms a bridge to the 30S subunit in the 70S ribosome.

One of the primary rRNA binding proteins. Required for association of the 30S and 50S subunits to form the 70S ribosome, for tRNA binding and peptide bond formation. It has been suggested to have peptidyltransferase activity; this is somewhat controversial. Makes several contacts with the 16S rRNA in the 70S ribosome. The chain is Large ribosomal subunit protein uL2 from Aliivibrio fischeri (strain ATCC 700601 / ES114) (Vibrio fischeri).